Consider the following 272-residue polypeptide: Glutamate racemase (272 aa).

Substrate contacts are provided by residues 10–11 (DS) and 42–43 (YG). Residue C74 is the Proton donor/acceptor of the active site. 75 to 76 (NT) lines the substrate pocket. The Proton donor/acceptor role is filled by C185. Residue 186 to 187 (TH) coordinates substrate.

It belongs to the aspartate/glutamate racemases family.

It carries out the reaction L-glutamate = D-glutamate. Its pathway is cell wall biogenesis; peptidoglycan biosynthesis. Provides the (R)-glutamate required for cell wall biosynthesis. The polypeptide is Glutamate racemase (Bacillus velezensis (strain DSM 23117 / BGSC 10A6 / LMG 26770 / FZB42) (Bacillus amyloliquefaciens subsp. plantarum)).